We begin with the raw amino-acid sequence, 688 residues long: Bifunctional protein GAL10 (688 aa).

Residues 1–346 form a galactowaldenase region; that stretch reads MSEDKYCLVT…TQDNPFGYQI (346 aa). An NAD(+)-binding site is contributed by 6–37; the sequence is YCLVTGGAGYIGSHTVVELCEAGYKCIVVDNL. Residues 347 to 688 form a mutarotase region; the sequence is KGVDSKFFGD…HKLSYTFRTL (342 aa). Catalysis depends on His525, which acts as the For mutarotase activity.

In the N-terminal section; belongs to the NAD(P)-dependent epimerase/dehydratase family. The protein in the C-terminal section; belongs to the aldose epimerase family. Requires NAD(+) as cofactor.

It catalyses the reaction UDP-alpha-D-glucose = UDP-alpha-D-galactose. The catalysed reaction is alpha-D-glucose = beta-D-glucose. The protein operates within carbohydrate metabolism; galactose metabolism. It participates in carbohydrate metabolism; hexose metabolism. In terms of biological role, mutarotase converts alpha-aldose to the beta-anomer. It is active on D-glucose, L-arabinose, D-xylose, D-galactose, maltose and lactose. The protein is Bifunctional protein GAL10 (GAL10) of Kluyveromyces lactis (strain ATCC 8585 / CBS 2359 / DSM 70799 / NBRC 1267 / NRRL Y-1140 / WM37) (Yeast).